We begin with the raw amino-acid sequence, 404 residues long: Probable thioredoxin reductase ARB_06224 (404 aa).

The N-terminal stretch at 1 to 22 is a signal peptide; the sequence is MGVQRLALALIAFTSALTSVIA. 67–75 lines the FAD pocket; sequence DEGIYRNGA. The cysteines at positions 172 and 175 are disulfide-linked. Asparagine 213 carries N-linked (GlcNAc...) asparagine glycosylation. 334 to 343 contributes to the FAD binding site; the sequence is DANNDGSTNG.

This sequence belongs to the class-II pyridine nucleotide-disulfide oxidoreductase family. As to quaternary structure, homodimer. It depends on FAD as a cofactor.

It is found in the secreted. It carries out the reaction [thioredoxin]-dithiol + NADP(+) = [thioredoxin]-disulfide + NADPH + H(+). In Arthroderma benhamiae (strain ATCC MYA-4681 / CBS 112371) (Trichophyton mentagrophytes), this protein is Probable thioredoxin reductase ARB_06224.